The following is a 551-amino-acid chain: Membrane protein insertase YidC (551 aa).

The helical transmembrane segment at 3–23 (ANHIRILLLVTIAIMFISLMG) threads the bilayer. Residues 33-47 (NTKQQTSATQNNSHY) are compositionally biased toward polar residues. Positions 33 to 58 (NTKQQTSATQNNSHYDNADSSTNTDV) are disordered. Helical transmembrane passes span 361 to 381 (LVGNWGLAIILVTCLIKLIFY), 431 to 451 (LSGCLPMLIQIPIFISLYWVL), and 504 to 524 (VMMFLPVIFTFLFASFPSGLV).

Belongs to the OXA1/ALB3/YidC family. Type 1 subfamily. In terms of assembly, interacts with the Sec translocase complex via SecD. Specifically interacts with transmembrane segments of nascent integral membrane proteins during membrane integration.

The protein localises to the cell inner membrane. Required for the insertion and/or proper folding and/or complex formation of integral membrane proteins into the membrane. Involved in integration of membrane proteins that insert both dependently and independently of the Sec translocase complex, as well as at least some lipoproteins. Aids folding of multispanning membrane proteins. This is Membrane protein insertase YidC from Francisella tularensis subsp. novicida (strain U112).